Reading from the N-terminus, the 55-residue chain is Large ribosomal subunit protein bL33 (55 aa).

The protein belongs to the bacterial ribosomal protein bL33 family.

This is Large ribosomal subunit protein bL33 from Aromatoleum aromaticum (strain DSM 19018 / LMG 30748 / EbN1) (Azoarcus sp. (strain EbN1)).